Reading from the N-terminus, the 423-residue chain is uncharacterized protein (423 aa).

This is an uncharacterized protein from Ictaluridae (bullhead catfishes).